The primary structure comprises 314 residues: Ornithine carbamoyltransferase (314 aa).

Residues 58–61, Q85, R109, and 136–139 contribute to the carbamoyl phosphate site; these read STRT and HPLQ. L-ornithine is bound by residues N168, D232, and 236–237; that span reads SM. Carbamoyl phosphate contacts are provided by residues 272-273 and R300; that span reads CL.

It belongs to the aspartate/ornithine carbamoyltransferase superfamily. OTCase family.

It localises to the cytoplasm. The catalysed reaction is carbamoyl phosphate + L-ornithine = L-citrulline + phosphate + H(+). It participates in amino-acid biosynthesis; L-arginine biosynthesis; L-arginine from L-ornithine and carbamoyl phosphate: step 1/3. Functionally, reversibly catalyzes the transfer of the carbamoyl group from carbamoyl phosphate (CP) to the N(epsilon) atom of ornithine (ORN) to produce L-citrulline. This is Ornithine carbamoyltransferase from Hyperthermus butylicus (strain DSM 5456 / JCM 9403 / PLM1-5).